We begin with the raw amino-acid sequence, 345 residues long: Holliday junction branch migration complex subunit RuvB (345 aa).

The interval 1–186 is large ATPase domain (RuvB-L); that stretch reads MSTDPDEREV…FGFTAHMDFY (186 aa). ATP is bound by residues Leu25, Arg26, Gly67, Lys70, Thr71, Ser72, 133–135, Arg176, Tyr186, and Arg223; that span reads EDF. Thr71 is a Mg(2+) binding site. The small ATPAse domain (RuvB-S) stretch occupies residues 187 to 257; sequence EPAELERVLV…VAKAALAVYD (71 aa). The head domain (RuvB-H) stretch occupies residues 260-345; that stretch reads ELGLDRLDRA…AGANQPGLFE (86 aa). 2 residues coordinate DNA: Arg315 and Arg320.

The protein belongs to the RuvB family. As to quaternary structure, homohexamer. Forms an RuvA(8)-RuvB(12)-Holliday junction (HJ) complex. HJ DNA is sandwiched between 2 RuvA tetramers; dsDNA enters through RuvA and exits via RuvB. An RuvB hexamer assembles on each DNA strand where it exits the tetramer. Each RuvB hexamer is contacted by two RuvA subunits (via domain III) on 2 adjacent RuvB subunits; this complex drives branch migration. In the full resolvosome a probable DNA-RuvA(4)-RuvB(12)-RuvC(2) complex forms which resolves the HJ.

The protein localises to the cytoplasm. The catalysed reaction is ATP + H2O = ADP + phosphate + H(+). Its function is as follows. The RuvA-RuvB-RuvC complex processes Holliday junction (HJ) DNA during genetic recombination and DNA repair, while the RuvA-RuvB complex plays an important role in the rescue of blocked DNA replication forks via replication fork reversal (RFR). RuvA specifically binds to HJ cruciform DNA, conferring on it an open structure. The RuvB hexamer acts as an ATP-dependent pump, pulling dsDNA into and through the RuvAB complex. RuvB forms 2 homohexamers on either side of HJ DNA bound by 1 or 2 RuvA tetramers; 4 subunits per hexamer contact DNA at a time. Coordinated motions by a converter formed by DNA-disengaged RuvB subunits stimulates ATP hydrolysis and nucleotide exchange. Immobilization of the converter enables RuvB to convert the ATP-contained energy into a lever motion, pulling 2 nucleotides of DNA out of the RuvA tetramer per ATP hydrolyzed, thus driving DNA branch migration. The RuvB motors rotate together with the DNA substrate, which together with the progressing nucleotide cycle form the mechanistic basis for DNA recombination by continuous HJ branch migration. Branch migration allows RuvC to scan DNA until it finds its consensus sequence, where it cleaves and resolves cruciform DNA. This chain is Holliday junction branch migration complex subunit RuvB, found in Mycobacterium ulcerans (strain Agy99).